A 335-amino-acid polypeptide reads, in one-letter code: Biotin synthase (335 aa).

Residues 50–279 (ADIQRAALLS…KARVRLSAGR (230 aa)) form the Radical SAM core domain. [4Fe-4S] cluster is bound by residues Cys-65, Cys-69, and Cys-72. The [2Fe-2S] cluster site is built by Cys-110, Cys-142, Cys-202, and Arg-274.

The protein belongs to the radical SAM superfamily. Biotin synthase family. Homodimer. [4Fe-4S] cluster serves as cofactor. It depends on [2Fe-2S] cluster as a cofactor.

The catalysed reaction is (4R,5S)-dethiobiotin + (sulfur carrier)-SH + 2 reduced [2Fe-2S]-[ferredoxin] + 2 S-adenosyl-L-methionine = (sulfur carrier)-H + biotin + 2 5'-deoxyadenosine + 2 L-methionine + 2 oxidized [2Fe-2S]-[ferredoxin]. It participates in cofactor biosynthesis; biotin biosynthesis; biotin from 7,8-diaminononanoate: step 2/2. In terms of biological role, catalyzes the conversion of dethiobiotin (DTB) to biotin by the insertion of a sulfur atom into dethiobiotin via a radical-based mechanism. The protein is Biotin synthase of Methylorubrum extorquens (strain CM4 / NCIMB 13688) (Methylobacterium extorquens).